The primary structure comprises 155 residues: Leader peptidase HopD (155 aa).

Belongs to the peptidase A24 family.

This Salmonella typhimurium (strain LT2 / SGSC1412 / ATCC 700720) protein is Leader peptidase HopD (hopD).